The chain runs to 155 residues: SsrA-binding protein (155 aa).

It belongs to the SmpB family.

Its subcellular location is the cytoplasm. Required for rescue of stalled ribosomes mediated by trans-translation. Binds to transfer-messenger RNA (tmRNA), required for stable association of tmRNA with ribosomes. tmRNA and SmpB together mimic tRNA shape, replacing the anticodon stem-loop with SmpB. tmRNA is encoded by the ssrA gene; the 2 termini fold to resemble tRNA(Ala) and it encodes a 'tag peptide', a short internal open reading frame. During trans-translation Ala-aminoacylated tmRNA acts like a tRNA, entering the A-site of stalled ribosomes, displacing the stalled mRNA. The ribosome then switches to translate the ORF on the tmRNA; the nascent peptide is terminated with the 'tag peptide' encoded by the tmRNA and targeted for degradation. The ribosome is freed to recommence translation, which seems to be the essential function of trans-translation. The sequence is that of SsrA-binding protein from Streptococcus pneumoniae (strain P1031).